Reading from the N-terminus, the 209-residue chain is Small ribosomal subunit protein uS4 (209 aa).

The Zn(2+) site is built by C9, C12, C26, and C31. The C4-type zinc-finger motif lies at 9–31 (CKLCRREGMKLYLKGERCYTDKC). Residues 98 to 161 (ARLDNVVYRM…RDLEVIKKAI (64 aa)) form the S4 RNA-binding domain.

The protein belongs to the universal ribosomal protein uS4 family. In terms of assembly, part of the 30S ribosomal subunit. Contacts protein S5. The interaction surface between S4 and S5 is involved in control of translational fidelity. Requires Zn(2+) as cofactor.

In terms of biological role, one of the primary rRNA binding proteins, it binds directly to 16S rRNA where it nucleates assembly of the body of the 30S subunit. Functionally, with S5 and S12 plays an important role in translational accuracy. In Thermotoga maritima (strain ATCC 43589 / DSM 3109 / JCM 10099 / NBRC 100826 / MSB8), this protein is Small ribosomal subunit protein uS4 (rpsD).